The chain runs to 129 residues: Regulator of ribonuclease activity B (129 aa).

This sequence belongs to the RraB family. In terms of assembly, interacts with the C-terminal region of Rne.

Its subcellular location is the cytoplasm. Globally modulates RNA abundance by binding to RNase E (Rne) and regulating its endonucleolytic activity. Can modulate Rne action in a substrate-dependent manner by altering the composition of the degradosome. The chain is Regulator of ribonuclease activity B from Shewanella denitrificans (strain OS217 / ATCC BAA-1090 / DSM 15013).